The primary structure comprises 397 residues: Acetate kinase (397 aa).

Residue N7 coordinates Mg(2+). K14 is a binding site for ATP. R90 lines the substrate pocket. Residue D147 is the Proton donor/acceptor of the active site. ATP-binding positions include 207-211, 282-284, and 330-334; these read HLGNG, DFR, and GLGEN. E383 contacts Mg(2+).

The protein belongs to the acetokinase family. Homodimer. Requires Mg(2+) as cofactor. The cofactor is Mn(2+).

The protein localises to the cytoplasm. The enzyme catalyses acetate + ATP = acetyl phosphate + ADP. Its pathway is metabolic intermediate biosynthesis; acetyl-CoA biosynthesis; acetyl-CoA from acetate: step 1/2. Functionally, catalyzes the formation of acetyl phosphate from acetate and ATP. Can also catalyze the reverse reaction. The chain is Acetate kinase from Clostridium botulinum (strain Loch Maree / Type A3).